A 252-amino-acid chain; its full sequence is Cell division protein ZapD (252 aa).

It belongs to the ZapD family. In terms of assembly, interacts with FtsZ.

Its subcellular location is the cytoplasm. Cell division factor that enhances FtsZ-ring assembly. Directly interacts with FtsZ and promotes bundling of FtsZ protofilaments, with a reduction in FtsZ GTPase activity. The chain is Cell division protein ZapD from Cupriavidus pinatubonensis (strain JMP 134 / LMG 1197) (Cupriavidus necator (strain JMP 134)).